We begin with the raw amino-acid sequence, 946 residues long: Phosphatidylinositol 4,5-bisphosphate 5-phosphatase INP51 (946 aa).

The SAC domain occupies 151–480; it reads LKKLFSDGTF…YYWLDRTYTK (330 aa). Disordered stretches follow at residues 872–902 and 927–946; these read SDSIAGPTHSPTPIPEPKRGRKLPPPSSDLK and PKRDPNPFVENEDEPLFIER. A compositionally biased stretch (acidic residues) spans 936–946; it reads ENEDEPLFIER.

This sequence belongs to the synaptojanin family. In the central section; belongs to the inositol 1,4,5-trisphosphate 5-phosphatase family. As to quaternary structure, interacts with IRS4 and TAX4.

The protein localises to the cytoplasm. It localises to the cytoskeleton. The protein resides in the actin patch. It catalyses the reaction a 1,2-diacyl-sn-glycero-3-phospho-(1D-myo-inositol-4,5-bisphosphate) + H2O = a 1,2-diacyl-sn-glycero-3-phospho-(1D-myo-inositol 4-phosphate) + phosphate. IRS4 and TAX4 are both positive regulator of INP51 activity and phosphatidylinositol 4,5-bisphosphate turnover. Controls the cellular levels and subcellular distribution of phosphatidylinositol 4,5-bisphosphate (PtdIns(4,5)P2). Does not utilize phosphatidylinositol 3,5-bisphosphate (PtdIns(3,5)P2), nor phosphatidylinositol 3-phosphate (PtdIns(3)P) and phosphatidylinositol 4-phosphate (PtdIns(4)P). Plays an essential role in a TGN (trans Golgi network)-to-early endosome pathway. Involved in endocytosis and acts as a negative regulator of the Slm pathway which modulates polarized actin assembly and growth. This is Phosphatidylinositol 4,5-bisphosphate 5-phosphatase INP51 (INP51) from Saccharomyces cerevisiae (strain ATCC 204508 / S288c) (Baker's yeast).